The sequence spans 491 residues: Putative diacyglycerol O-acyltransferase MT2557 (491 aa).

Catalysis depends on His-145, which acts as the Proton acceptor.

This sequence belongs to the long-chain O-acyltransferase family.

It catalyses the reaction an acyl-CoA + a 1,2-diacyl-sn-glycerol = a triacyl-sn-glycerol + CoA. It functions in the pathway glycerolipid metabolism; triacylglycerol biosynthesis. The sequence is that of Putative diacyglycerol O-acyltransferase MT2557 from Mycobacterium tuberculosis (strain CDC 1551 / Oshkosh).